The chain runs to 184 residues: dCTP deaminase (184 aa).

Residues 97–102 (RSTFAR) and Asp-113 each bind dCTP. Glu-123 acts as the Proton donor/acceptor in catalysis. DCTP contacts are provided by Tyr-155 and Gln-162.

This sequence belongs to the dCTP deaminase family. In terms of assembly, homotrimer.

The catalysed reaction is dCTP + H2O + H(+) = dUTP + NH4(+). Its pathway is pyrimidine metabolism; dUMP biosynthesis; dUMP from dCTP (dUTP route): step 1/2. Catalyzes the deamination of dCTP to dUTP. The sequence is that of dCTP deaminase from Saccharolobus solfataricus (strain ATCC 35092 / DSM 1617 / JCM 11322 / P2) (Sulfolobus solfataricus).